Reading from the N-terminus, the 313-residue chain is D-apiose import binding protein (313 aa).

A signal peptide spans Met1–Ser26. D-apiofuranose-binding positions include Asn39, Asp115–Arg116, Asp162–Asn164, Arg168, Asn218, Asp243, and Gln263.

It belongs to the bacterial solute-binding protein 2 family.

It localises to the periplasm. Its function is as follows. Part of an ABC transporter complex involved in D-apiose import. The sequence is that of D-apiose import binding protein from Rhizobium rhizogenes (strain K84 / ATCC BAA-868) (Agrobacterium radiobacter).